A 279-amino-acid polypeptide reads, in one-letter code: Tryptophan synthase alpha chain (279 aa).

Residues Glu50 and Asp61 each act as proton acceptor in the active site.

Belongs to the TrpA family. In terms of assembly, tetramer of two alpha and two beta chains.

It catalyses the reaction (1S,2R)-1-C-(indol-3-yl)glycerol 3-phosphate + L-serine = D-glyceraldehyde 3-phosphate + L-tryptophan + H2O. It participates in amino-acid biosynthesis; L-tryptophan biosynthesis; L-tryptophan from chorismate: step 5/5. Functionally, the alpha subunit is responsible for the aldol cleavage of indoleglycerol phosphate to indole and glyceraldehyde 3-phosphate. This is Tryptophan synthase alpha chain from Brucella suis biovar 1 (strain 1330).